A 571-amino-acid polypeptide reads, in one-letter code: Urease subunit alpha (571 aa).

Residues 133–571 enclose the Urease domain; the sequence is GGIDTHVHFI…LPLTQRYFLF (439 aa). Positions 138, 140, and 221 each coordinate Ni(2+). An N6-carboxylysine modification is found at lysine 221. Histidine 223 contacts substrate. Ni(2+)-binding residues include histidine 250 and histidine 276. Histidine 324 serves as the catalytic Proton donor. A Ni(2+)-binding site is contributed by aspartate 364.

Belongs to the metallo-dependent hydrolases superfamily. Urease alpha subunit family. As to quaternary structure, heterotrimer of UreA (gamma), UreB (beta) and UreC (alpha) subunits. Three heterotrimers associate to form the active enzyme. Requires Ni cation as cofactor. Carboxylation allows a single lysine to coordinate two nickel ions.

The protein resides in the cytoplasm. It carries out the reaction urea + 2 H2O + H(+) = hydrogencarbonate + 2 NH4(+). The protein operates within nitrogen metabolism; urea degradation; CO(2) and NH(3) from urea (urease route): step 1/1. The protein is Urease subunit alpha of Staphylococcus aureus (strain bovine RF122 / ET3-1).